A 396-amino-acid chain; its full sequence is Elongation factor Tu (396 aa).

Residues 10-206 (KPHVNVGTIG…ALDSYIPTPK (197 aa)) enclose the tr-type G domain. The G1 stretch occupies residues 19-26 (GHVDHGKT). 19 to 26 (GHVDHGKT) is a GTP binding site. Mg(2+) is bound at residue T26. Residues 60–64 (GITIS) are G2. The G3 stretch occupies residues 81–84 (DCPG). GTP contacts are provided by residues 81 to 85 (DCPGH) and 136 to 139 (NKAD). Positions 136–139 (NKAD) are G4. The G5 stretch occupies residues 174-176 (SAL).

The protein belongs to the TRAFAC class translation factor GTPase superfamily. Classic translation factor GTPase family. EF-Tu/EF-1A subfamily. As to quaternary structure, monomer.

It is found in the cytoplasm. The enzyme catalyses GTP + H2O = GDP + phosphate + H(+). GTP hydrolase that promotes the GTP-dependent binding of aminoacyl-tRNA to the A-site of ribosomes during protein biosynthesis. The chain is Elongation factor Tu from Vesicomyosocius okutanii subsp. Calyptogena okutanii (strain HA).